The sequence spans 900 residues: Methionine--tRNA ligase, cytoplasmic (900 aa).

Residues 74–198 enclose the GST C-terminal domain; that stretch reads GWEQDDLTNQ…VLKQQGVLAL (125 aa). The 'HIGH' region signature appears at 273–283; that stretch reads PYVNNVPHLGN. A 'KMSKS' region motif is present at residues 593 to 597; that stretch reads KFSKS. K596 contributes to the ATP binding site. S825 is subject to Phosphoserine. The residue at position 835 (T835) is a Phosphothreonine. One can recognise a WHEP-TRS domain in the interval 841–897; that stretch reads QIQALMDEVTKQGNIVRELKAQKADKNEVAAEVAKLLDLKKQLAVAEGKPPEAPKGK.

Belongs to the class-I aminoacyl-tRNA synthetase family. In terms of assembly, monomer. Part of a multisubunit complex that groups tRNA ligases for Arg (RARS1), Asp (DARS1), Gln (QARS1), Ile (IARS1), Leu (LARS1), Lys (KARS1), Met (MARS1) the bifunctional ligase for Glu and Pro (EPRS1) and the auxiliary subunits AIMP1/p43, AIMP2/p38 and EEF1E1/p18. Forms a linear complex that contains MARS1, EEF1E1, EPRS1 and AIMP2 that is at the core of the multisubunit complex.

It is found in the cytoplasm. It localises to the cytosol. Its subcellular location is the nucleus. The protein resides in the nucleolus. The catalysed reaction is tRNA(Met) + L-methionine + ATP = L-methionyl-tRNA(Met) + AMP + diphosphate. Its activity is regulated as follows. Enzyme activity is increased by spermidine, EEF1A1, and when the Mg(2+) concentration is increased from 5 mM to 13 mM (in vitro), possibly by promoting the dissociation of the complex between the enzyme and its product. Its function is as follows. Catalyzes the specific attachment of an amino acid to its cognate tRNA in a 2 step reaction: the amino acid (AA) is first activated by ATP to form AA-AMP and then transferred to the acceptor end of the tRNA. Plays a role in the synthesis of ribosomal RNA in the nucleolus. In Homo sapiens (Human), this protein is Methionine--tRNA ligase, cytoplasmic.